We begin with the raw amino-acid sequence, 195 residues long: Keratin-associated protein 4-3 (195 aa).

28 tandem repeats follow at residues 34-38 (CCRTT), 39-43 (CCRPS), 44-48 (CCISS), 49-53 (CCRPS), 54-58 (CCISS), 59-63 (CCKPS), 64-68 (CCRTT), 69-73 (CCRPS), 74-78 (CCISS), 79-83 (CCRPS), 84-88 (CCISS), 89-93 (CCKPS), 94-98 (CCRTT), 99-103 (CCRPS), 104-108 (CCISS), 109-113 (CCRPS), 114-118 (CCISS), 119-123 (CCKPS), 124-128 (CCQTT), 129-133 (CCRPS), 134-138 (CCISS), 144-148 (CCQPS), 149-153 (CCRPA), 154-158 (CCISS), 159-163 (CCHPS), 164-168 (CCVSS), 179-183 (CCRTT), and 189-193 (CCGSS). Residues 34–193 (CCRTTCCRPS…CFHPICCGSS (160 aa)) are 29 X 5 AA repeats of C-C-[GIKRQVH]-[SPT]-[STA].

This sequence belongs to the KRTAP type 4 family. Interacts with hair keratins. In terms of tissue distribution, expressed specifically in the middle/uper portions of the hair cortex. Not detected in the hair matrix or cuticle.

Its function is as follows. In the hair cortex, hair keratin intermediate filaments are embedded in an interfilamentous matrix, consisting of hair keratin-associated proteins (KRTAP), which are essential for the formation of a rigid and resistant hair shaft through their extensive disulfide bond cross-linking with abundant cysteine residues of hair keratins. The matrix proteins include the high-sulfur and high-glycine-tyrosine keratins. This is Keratin-associated protein 4-3 (KRTAP4-3) from Homo sapiens (Human).